The following is a 1354-amino-acid chain: High molecular weight rhoptry protein 2 (1354 aa).

Residues 1–20 (MVKLSGIILLSLVWLKLNNS) form the signal peptide. 2 disulfides stabilise this stretch: Cys50–Cys75 and Cys220–Cys227. The chain crosses the membrane as a helical span at residues 716-736 (LIFAAYMLTLVFFIESQIDIS). Disulfide bonds link Cys768/Cys828, Cys848/Cys889, and Cys924/Cys1011.

In terms of assembly, component of the RhopH complex. RhopH complex is composed of CLAG3.1/CLAG3.2, RhopH2 and RhopH3 with a 1:1:1 subunit stoichiometry. Interacts with CLAG3.1/CLAG3.2.

It localises to the host cell membrane. It is found in the parasitophorous vacuole membrane. The protein localises to the host cytoplasm. The protein resides in the cytoplasm. Its subcellular location is the cytoplasmic vesicle. It localises to the secretory vesicle. It is found in the rhoptry. Its function is as follows. Participates in the formation of new permeability pathways in Plasmodium-infected erythrocytes enabling the uptake of nutrients from the blood plasma. Required for maintaining invasion capacity of merozoites. Required for parasite growth and proliferation. This Plasmodium berghei (strain Anka) protein is High molecular weight rhoptry protein 2.